The following is a 365-amino-acid chain: Aminomethyltransferase (365 aa).

This sequence belongs to the GcvT family. In terms of assembly, the glycine cleavage system is composed of four proteins: P, T, L and H.

The catalysed reaction is N(6)-[(R)-S(8)-aminomethyldihydrolipoyl]-L-lysyl-[protein] + (6S)-5,6,7,8-tetrahydrofolate = N(6)-[(R)-dihydrolipoyl]-L-lysyl-[protein] + (6R)-5,10-methylene-5,6,7,8-tetrahydrofolate + NH4(+). In terms of biological role, the glycine cleavage system catalyzes the degradation of glycine. The protein is Aminomethyltransferase of Halalkalibacterium halodurans (strain ATCC BAA-125 / DSM 18197 / FERM 7344 / JCM 9153 / C-125) (Bacillus halodurans).